A 207-amino-acid polypeptide reads, in one-letter code: Guanylate kinase (207 aa).

The 180-residue stretch at 6–185 folds into the Guanylate kinase-like domain; that stretch reads GLLIVLSGPS…AKNRIQSIVE (180 aa). 13–20 is an ATP binding site; that stretch reads GPSGVGKG.

This sequence belongs to the guanylate kinase family.

It is found in the cytoplasm. The catalysed reaction is GMP + ATP = GDP + ADP. Functionally, essential for recycling GMP and indirectly, cGMP. The protein is Guanylate kinase of Staphylococcus epidermidis (strain ATCC 35984 / DSM 28319 / BCRC 17069 / CCUG 31568 / BM 3577 / RP62A).